The following is a 101-amino-acid chain: uncharacterized protein (101 aa).

An N-terminal signal peptide occupies residues 1-21 (MKLSTCCAALLLALASPAVLA). Residues 79-94 (RTTSGNVSAPAQSSQD) are compositionally biased toward polar residues. The tract at residues 79-101 (RTTSGNVSAPAQSSQDGAPAEPQ) is disordered.

This is an uncharacterized protein from Escherichia coli (strain K12).